A 307-amino-acid polypeptide reads, in one-letter code: MmsAB operon regulatory protein (307 aa).

Residues 201-299 (DGLHAYMREH…GLSPSAYRQR (99 aa)) enclose the HTH araC/xylS-type domain. 2 DNA-binding regions (H-T-H motif) span residues 218–239 (ERLAAFCNLSKFHFVSRYKAIT) and 266–289 (VARVGQAVGYDDSYYFSRLFSKVM).

Functionally, regulatory protein for the mmsAB operon. Activates the transcription of the mmsAB genes. This chain is MmsAB operon regulatory protein, found in Pseudomonas aeruginosa (strain ATCC 15692 / DSM 22644 / CIP 104116 / JCM 14847 / LMG 12228 / 1C / PRS 101 / PAO1).